The following is a 134-amino-acid chain: S-adenosylmethionine decarboxylase proenzyme (134 aa).

Serine 64 serves as the catalytic Schiff-base intermediate with substrate; via pyruvic acid. At serine 64 the chain carries Pyruvic acid (Ser); by autocatalysis. Histidine 69 functions as the Proton acceptor; for processing activity in the catalytic mechanism. The Proton donor; for catalytic activity role is filled by cysteine 84.

It belongs to the prokaryotic AdoMetDC family. Type 1 subfamily. In terms of assembly, heterotetramer of two alpha and two beta chains arranged as a dimer of alpha/beta heterodimers. It depends on pyruvate as a cofactor. Post-translationally, is synthesized initially as an inactive proenzyme. Formation of the active enzyme involves a self-maturation process in which the active site pyruvoyl group is generated from an internal serine residue via an autocatalytic post-translational modification. Two non-identical subunits are generated from the proenzyme in this reaction, and the pyruvate is formed at the N-terminus of the alpha chain, which is derived from the carboxyl end of the proenzyme. The post-translation cleavage follows an unusual pathway, termed non-hydrolytic serinolysis, in which the side chain hydroxyl group of the serine supplies its oxygen atom to form the C-terminus of the beta chain, while the remainder of the serine residue undergoes an oxidative deamination to produce ammonia and the pyruvoyl group blocking the N-terminus of the alpha chain.

It carries out the reaction S-adenosyl-L-methionine + H(+) = S-adenosyl 3-(methylsulfanyl)propylamine + CO2. It participates in amine and polyamine biosynthesis; S-adenosylmethioninamine biosynthesis; S-adenosylmethioninamine from S-adenosyl-L-methionine: step 1/1. In terms of biological role, catalyzes the decarboxylation of S-adenosylmethionine to S-adenosylmethioninamine (dcAdoMet), the propylamine donor required for the synthesis of the polyamines spermine and spermidine from the diamine putrescine. The chain is S-adenosylmethionine decarboxylase proenzyme from Hydrogenobaculum sp. (strain Y04AAS1).